The chain runs to 585 residues: Beta-(1--&gt;2)glucan export ATP-binding/permease protein NdvA (585 aa).

Residues 21 to 301 (VGAIVIANIV…MKAFATQIFE (281 aa)) form the ABC transmembrane type-1 domain. Helical transmembrane passes span 22-42 (GAIVIANIVLAAITIAEPILF), 55-75 (VAPMLLLWAGFGVFNTIAFVL), 136-156 (QHLATAVALMLLIPTAFAMDV), 158-178 (LSLILVVLGAAYVMISKVVMS), 245-265 (LNRIASTISMMAILVIGTVLV), and 269-289 (ELGVGEVIAFIGFANLLIGRL). The ABC transporter domain occupies 335–569 (VEFRDISFDF…NGRFAALLRA (235 aa)). 368-375 (GPTGAGKT) lines the ATP pocket.

Belongs to the ABC transporter superfamily. Beta-(1--&gt;2)glucan exporter (TC 3.A.1.108.1) family. In terms of assembly, homodimer.

It localises to the cell inner membrane. It catalyses the reaction [(1-&gt;2)-beta-D-glucosyl](n)(in) + ATP + H2O = [(1-&gt;2)-beta-D-glucosyl](n)(out) + ADP + phosphate + H(+). Involved in beta-(1--&gt;2)glucan export which is required for nodulation of legume roots. May be involved in other classes of oligosaccharides export. Transmembrane domains (TMD) form a pore in the inner membrane and the ATP-binding domain (NBD) is responsible for energy generation. This is Beta-(1--&gt;2)glucan export ATP-binding/permease protein NdvA from Rhizobium meliloti (strain 1021) (Ensifer meliloti).